We begin with the raw amino-acid sequence, 183 residues long: Adenine phosphoribosyltransferase (183 aa).

It belongs to the purine/pyrimidine phosphoribosyltransferase family. In terms of assembly, homodimer.

The protein resides in the cytoplasm. The enzyme catalyses AMP + diphosphate = 5-phospho-alpha-D-ribose 1-diphosphate + adenine. It participates in purine metabolism; AMP biosynthesis via salvage pathway; AMP from adenine: step 1/1. Catalyzes a salvage reaction resulting in the formation of AMP, that is energically less costly than de novo synthesis. This is Adenine phosphoribosyltransferase from Shewanella sp. (strain MR-7).